The following is a 3084-amino-acid chain: Highly reducing polyketide synthase sdnO (3084 aa).

Positions 4 to 430 (PIPLAVVGIA…GTNAHAVLEK (427 aa)) constitute a Ketosynthase family 3 (KS3) domain. Residues Cys178, His313, and His353 each act as for beta-ketoacyl synthase activity in the active site. Residues 541–841 (FIFTGQGAQW…LAGPLRQSVA (301 aa)) are malonyl-CoA:ACP transacylase (MAT) domain. Ser632 (for malonyltransferase activity) is an active-site residue. The interval 931-1071 (HDLLGLRMTD…GSVLIDLVSS (141 aa)) is N-terminal hotdog fold. The segment at 931-1243 (HDLLGLRMTD…RSAEADMLVF (313 aa)) is dehydratase (DH) domain. Positions 931-1275 (HDLLGLRMTD…LRSLAALDGA (345 aa)) constitute a PKS/mFAS DH domain. His963 functions as the Proton acceptor; for dehydratase activity in the catalytic mechanism. The segment at 1099–1275 (LQPGEDIPPS…LRSLAALDGA (177 aa)) is C-terminal hotdog fold. The Proton donor; for dehydratase activity role is filled by Asp1177. Positions 1733–2045 (GTAHAATFVE…RHENMTKYVV (313 aa)) are enoylreductase (ER) domain. The tract at residues 2069 to 2252 (ATYVVAGGLG…YMALNIGLIE (184 aa)) is catalytic ketoreductase (KRc) domain. One can recognise a Carrier domain in the interval 2363-2440 (DIEAFAARAI…ALARKVTLRS (78 aa)). An O-(pantetheine 4'-phosphoryl)serine modification is found at Ser2400. Residues 2445 to 2501 (GGAGGDASSTGNSESMARTPSDSSTVPTSIPATPSRSPSREPPAKETLTKSQQHLPI) form a disordered region. The segment covering 2456-2481 (NSESMARTPSDSSTVPTSIPATPSRS) has biased composition (polar residues). Positions 2482 to 2492 (PSREPPAKETL) are enriched in basic and acidic residues. The tract at residues 2864-3084 (HFYSQLNRAF…LGVVRRVVEG (221 aa)) is choline/carnitine acyltransferase domain.

Its pathway is antibiotic biosynthesis. In terms of biological role, highly reducing polyketide synthase; part of the gene cluster that mediates the biosynthesis of sordarin and hypoxysordarin, glycoside antibiotics with a unique tetracyclic diterpene aglycone structure. First, the geranylgeranyl diphosphate synthase sdnC constructs GGDP from farnesyl diphosphate and isopentenyl diphosphate. The diterpene cyclase sdnA then catalyzes the cyclization of GGDP to afford cycloaraneosene. Cycloaraneosene is then hydroxylated four times by the putative cytochrome P450 monooxygenases sdnB, sdnE, sdnF and sdnH to give a hydroxylated cycloaraneosene derivative such as cycloaraneosene-8,9,13,19-tetraol. Although the order of the hydroxylations is unclear, at least C8, C9 and C13 of the cycloaraneosene skeleton are hydroxylated before the sordaricin formation. Dehydration of the 13-hydroxy group of the hydroxylated cycloaraneosene derivative might be catalyzed by an unassigned hypothetical protein such as sdnG and sdnP to construct the cyclopentadiene moiety. The FAD-dependent oxidoreductase sdnN is proposed to catalyze the oxidation at C9 of the hydroxylated cycloaraneosene derivative and also catalyze the Baeyer-Villiger oxidation to give the lactone intermediate. The presumed lactone intermediate would be hydrolyzed to give an acrolein moiety and a carboxylate moiety. Then, [4+2]cycloaddition would occur between the acrolein moiety and the cyclopentadiene moiety to give sordaricin. SdnN might also be involved in the [4+2]cycloaddition after the hypothesized oxidation to accommodate the oxidized product and prompt the [4+2]cycloaddition. GDP-6-deoxy-D-altrose may be biosynthesized from GDP-D-mannose by the putative GDP-mannose-4,6-dehydratase sdnI and the short-chain dehydrogenase sdnK. The glycosyltransferase sdnJ catalyzes the attachment of 6-deoxy-D-altrose onto the 19-hydroxy group of sordaricin to give 4'-O-demethylsordarin. The methyltransferase sdnD would complete the biosynthesis of sordarin. Sordarin can be further modified into hypoxysordarin. The unique acyl chain at the 3'-hydroxy group of hypoxysordarin would be constructed by an iterative type I PKS sdnO and the trans-acting polyketide methyltransferase sdnL. SdnL would be responsible for the introduction of an alpha-methyl group of the polyketide chain. Alternatively, the putative beta-lactamase-like sdnR might be responsible for the cleavage and transfer of the polyketide chain from the PKS sdnO to sordarin. Two putative cytochrome P450 monooxygenases, sdnQ and sdnT, might catalyze the epoxidations of the polyketide chain to complete the biosynthesis of hypoxysordarin. Transcriptional regulators sdnM and sdnS are presumably encoded for the transcriptional regulation of the expression of the sdn gene cluster. This is Highly reducing polyketide synthase sdnO from Sordaria araneosa (Pleurage araneosa).